The sequence spans 1590 residues: Pentafunctional AROM polypeptide (1590 aa).

The interval 1-387 (MGSTTFENPT…YEPKASVVED (387 aa)) is 3-dehydroquinate synthase. NAD(+) is bound by residues 49–51 (DTN), 86–89 (ENSK), 117–119 (GGV), and Asp122. Residue Arg133 coordinates 7-phospho-2-dehydro-3-deoxy-D-arabino-heptonate. Residue 142–143 (TT) coordinates NAD(+). The 7-phospho-2-dehydro-3-deoxy-D-arabino-heptonate site is built by Asp149 and Lys155. NAD(+) is bound at residue Lys164. Asn165 is a 7-phospho-2-dehydro-3-deoxy-D-arabino-heptonate binding site. Residues 182-185 (FLET) and Asn193 contribute to the NAD(+) site. Glu197 is a binding site for Zn(2+). 7-phospho-2-dehydro-3-deoxy-D-arabino-heptonate-binding positions include 197–200 (EVVK) and Lys253. Glu263 serves as the catalytic Proton acceptor; for 3-dehydroquinate synthase activity. 7-phospho-2-dehydro-3-deoxy-D-arabino-heptonate is bound by residues 267–271 (RNILN) and His274. His274 serves as a coordination point for Zn(2+). His278 (proton acceptor; for 3-dehydroquinate synthase activity) is an active-site residue. 7-phospho-2-dehydro-3-deoxy-D-arabino-heptonate is bound by residues His290 and Lys359. His290 serves as a coordination point for Zn(2+). Positions 400-841 (VRPSVPETLN…WDILSKSFQV (442 aa)) are EPSP synthase. Catalysis depends on Cys823, which acts as the For EPSP synthase activity. The interval 863–1055 (DKSIFIIGMR…RNKPQSFFVS (193 aa)) is shikimate kinase. 870 to 877 (GMRGAGKT) contacts ATP. The 3-dehydroquinase stretch occupies residues 1056 to 1276 (LTMPDISGAA…AAPGQLSAAE (221 aa)). The active-site Proton acceptor; for 3-dehydroquinate dehydratase activity is the His1179. Lys1207 serves as the catalytic Schiff-base intermediate with substrate; for 3-dehydroquinate dehydratase activity. A shikimate dehydrogenase region spans residues 1289–1590 (PKSFYLFGTP…KMDKHPTFVC (302 aa)).

The protein in the N-terminal section; belongs to the sugar phosphate cyclases superfamily. Dehydroquinate synthase family. It in the 2nd section; belongs to the EPSP synthase family. In the 3rd section; belongs to the shikimate kinase family. This sequence in the 4th section; belongs to the type-I 3-dehydroquinase family. The protein in the C-terminal section; belongs to the shikimate dehydrogenase family. Homodimer. The cofactor is Zn(2+).

It is found in the cytoplasm. It catalyses the reaction 7-phospho-2-dehydro-3-deoxy-D-arabino-heptonate = 3-dehydroquinate + phosphate. It carries out the reaction 3-dehydroquinate = 3-dehydroshikimate + H2O. The catalysed reaction is shikimate + NADP(+) = 3-dehydroshikimate + NADPH + H(+). The enzyme catalyses shikimate + ATP = 3-phosphoshikimate + ADP + H(+). It catalyses the reaction 3-phosphoshikimate + phosphoenolpyruvate = 5-O-(1-carboxyvinyl)-3-phosphoshikimate + phosphate. Its pathway is metabolic intermediate biosynthesis; chorismate biosynthesis; chorismate from D-erythrose 4-phosphate and phosphoenolpyruvate: step 2/7. It participates in metabolic intermediate biosynthesis; chorismate biosynthesis; chorismate from D-erythrose 4-phosphate and phosphoenolpyruvate: step 3/7. It functions in the pathway metabolic intermediate biosynthesis; chorismate biosynthesis; chorismate from D-erythrose 4-phosphate and phosphoenolpyruvate: step 4/7. The protein operates within metabolic intermediate biosynthesis; chorismate biosynthesis; chorismate from D-erythrose 4-phosphate and phosphoenolpyruvate: step 5/7. Its pathway is metabolic intermediate biosynthesis; chorismate biosynthesis; chorismate from D-erythrose 4-phosphate and phosphoenolpyruvate: step 6/7. The AROM polypeptide catalyzes 5 consecutive enzymatic reactions in prechorismate polyaromatic amino acid biosynthesis. In Sclerotinia sclerotiorum (White mold), this protein is Pentafunctional AROM polypeptide.